The chain runs to 667 residues: UvrABC system protein B (667 aa).

The 384-residue stretch at 31–414 (KNFEAGAKAQ…EAEQTDIQVD (384 aa)) folds into the Helicase ATP-binding domain. 44 to 51 (GATGTGKT) contacts ATP. The short motif at 97–120 (YYDYYQPEAYVPSSDTYIEKDSSI) is the Beta-hairpin element. The Helicase C-terminal domain occupies 435–597 (QIDDLVGEIN…ITPKTIIKPI (163 aa)). The region spanning 630–665 (LEMVERLSEQMRLAAKKLDFEQAATLRDTILELKSE) is the UVR domain.

Belongs to the UvrB family. As to quaternary structure, forms a heterotetramer with UvrA during the search for lesions. Interacts with UvrC in an incision complex.

The protein resides in the cytoplasm. In terms of biological role, the UvrABC repair system catalyzes the recognition and processing of DNA lesions. A damage recognition complex composed of 2 UvrA and 2 UvrB subunits scans DNA for abnormalities. Upon binding of the UvrA(2)B(2) complex to a putative damaged site, the DNA wraps around one UvrB monomer. DNA wrap is dependent on ATP binding by UvrB and probably causes local melting of the DNA helix, facilitating insertion of UvrB beta-hairpin between the DNA strands. Then UvrB probes one DNA strand for the presence of a lesion. If a lesion is found the UvrA subunits dissociate and the UvrB-DNA preincision complex is formed. This complex is subsequently bound by UvrC and the second UvrB is released. If no lesion is found, the DNA wraps around the other UvrB subunit that will check the other stand for damage. This chain is UvrABC system protein B, found in Latilactobacillus sakei subsp. sakei (strain 23K) (Lactobacillus sakei subsp. sakei).